The sequence spans 258 residues: Global transcriptional regulator CodY (258 aa).

Residues Met1–Leu156 are GAF domain. Residues Ala204 to Arg223 constitute a DNA-binding region (H-T-H motif).

This sequence belongs to the CodY family.

It localises to the cytoplasm. DNA-binding global transcriptional regulator which is involved in the adaptive response to starvation and acts by directly or indirectly controlling the expression of numerous genes in response to nutrient availability. During rapid exponential growth, CodY is highly active and represses genes whose products allow adaptation to nutrient depletion. The polypeptide is Global transcriptional regulator CodY (Clostridium kluyveri (strain NBRC 12016)).